We begin with the raw amino-acid sequence, 590 residues long: MYYTSGNYEAFATPRKPEGVDQKSAYIVGTGLAGLAAAVFLIRDGHMAGERIHLFEELPLAGGSLDGIEKPHLGFVTRGGREMENHFECMWDMYRSIPSLEIPGASYLDEFYWLDKDDPNSSNCRLIHKRGNRVDDDGQYTLGKQSKELIHLIMKTEESLGDQTIEEFFSEDFFKSNFWVYWATMFAFEKWHSAVEMRRYAMRFIHHIDGLPDFTSLKFNKYNQYDSMVKPIIAYLESHDVDIQFDTKVTDIQVEQTAGKKVAKTIHMTVSGEAKAIELTPDDLVFVTNGSITESSTYGSHHEVAKPTKALGGSWNLWENLAAQSDDFGHPKVFYQDLPAESWFVSATATIKHPAIEPYIERLTHRDLHDGKVNTGGIITITDSNWMMSFAIHRQPHFKEQKENETTVWIYGLYSNSEGNYVHKKIEECTGQEITEEWLYHLGVPVDKIKDLASQEYINTVPVYMPYITSYFMPRVKGDRPKVIPDGSVNLAFIGNFAESPSRDTVFTTEYSIRTAMEAVYSFLNGERGIPQGFNSAYDIRELLKAFYYLNDKKAIKDMDLPIPALIEKIGHKKIKDTFIEELLKDANLM.

Alanine 33, glutamate 56, serine 64, and glutamate 82 together coordinate FAD. Glutamate 82 acts as the Proton acceptor in catalysis. Catalysis depends on tyrosine 200, which acts as the Proton donor. Residues valine 249, serine 291, threonine 508, and serine 512 each contribute to the FAD site.

It belongs to the oleate hydratase family. Monomer and homodimer. Both forms seem to be active. FAD serves as cofactor.

It catalyses the reaction (R)-10-hydroxyoctadecanoate = (9Z)-octadecenoate + H2O. It carries out the reaction (9Z)-octadecenoate + H2O = 10-hydroxyoctadecanoate. The catalysed reaction is (9Z)-hexadecenoate + H2O = 10-hydroxyhexadecanoate. The enzyme catalyses (9Z,12Z)-octadecadienoate + H2O = (12Z)-10-hydroxyoctadecenoate. It catalyses the reaction (12Z)-10-hydroxyoctadecenoate + H2O = 10,13-dihydroxyoctadecanoate. It carries out the reaction (9Z,12Z,15Z)-octadecatrienoate + H2O = (12Z,15Z)-10-hydroxyoctadecadienoate. It participates in lipid metabolism; fatty acid metabolism. In terms of biological role, catalyzes the hydration of oleate at its cis-9-double bond to yield 10-hydroxyoctadecanoate, probably in the (R) configuration, and of linoleate at its cis-9- and cis-12-double bond to yield 10-hydroxy-12-octadecenoate and 10,13-dihydroxyoctadecanoate. Is not active on trans-double bonds and esterified fatty acids as substrate; is only active on cis-9- and/or cis-12-double bond of C16 and C18 fatty acids without any trans-configurations, producing 10-hydroxy and 10,13-dihydroxy derivatives. Appears to play a role in oleic acid detoxification and bacterial virulence. In Streptococcus pyogenes serotype M49 (strain NZ131), this protein is Oleate hydratase (sph).